Here is a 189-residue protein sequence, read N- to C-terminus: Peptidyl-tRNA hydrolase (189 aa).

Y14 contributes to the tRNA binding site. Residue H19 is the Proton acceptor of the active site. Y64, N66, and N112 together coordinate tRNA.

The protein belongs to the PTH family. In terms of assembly, monomer.

Its subcellular location is the cytoplasm. It carries out the reaction an N-acyl-L-alpha-aminoacyl-tRNA + H2O = an N-acyl-L-amino acid + a tRNA + H(+). Hydrolyzes ribosome-free peptidyl-tRNAs (with 1 or more amino acids incorporated), which drop off the ribosome during protein synthesis, or as a result of ribosome stalling. Functionally, catalyzes the release of premature peptidyl moieties from peptidyl-tRNA molecules trapped in stalled 50S ribosomal subunits, and thus maintains levels of free tRNAs and 50S ribosomes. This is Peptidyl-tRNA hydrolase from Clostridium botulinum (strain Kyoto / Type A2).